We begin with the raw amino-acid sequence, 699 residues long: Elongation factor G (699 aa).

In terms of domain architecture, tr-type G spans 8–283 (EHIRNIGICA…AVVYFLPSPI (276 aa)). Residues 17–24 (AHIDAGKT), 81–85 (DTPGH), and 135–138 (NKMD) contribute to the GTP site.

Belongs to the TRAFAC class translation factor GTPase superfamily. Classic translation factor GTPase family. EF-G/EF-2 subfamily.

Its subcellular location is the cytoplasm. In terms of biological role, catalyzes the GTP-dependent ribosomal translocation step during translation elongation. During this step, the ribosome changes from the pre-translocational (PRE) to the post-translocational (POST) state as the newly formed A-site-bound peptidyl-tRNA and P-site-bound deacylated tRNA move to the P and E sites, respectively. Catalyzes the coordinated movement of the two tRNA molecules, the mRNA and conformational changes in the ribosome. This is Elongation factor G from Rickettsia akari (strain Hartford).